Consider the following 166-residue polypeptide: UPF0260 protein GbCGDNIH1_2046 (166 aa).

The tract at residues 147 to 166 is disordered; that stretch reads RFPRPRRPRQEPAGKTADES. Positions 154–166 are enriched in basic and acidic residues; it reads PRQEPAGKTADES.

This sequence belongs to the UPF0260 family.

This chain is UPF0260 protein GbCGDNIH1_2046, found in Granulibacter bethesdensis (strain ATCC BAA-1260 / CGDNIH1).